The chain runs to 174 residues: ATP-dependent protease subunit HslV (174 aa).

Threonine 2 is a catalytic residue. Na(+) contacts are provided by glycine 157, cysteine 160, and threonine 163.

The protein belongs to the peptidase T1B family. HslV subfamily. In terms of assembly, a double ring-shaped homohexamer of HslV is capped on each side by a ring-shaped HslU homohexamer. The assembly of the HslU/HslV complex is dependent on binding of ATP.

It localises to the cytoplasm. It catalyses the reaction ATP-dependent cleavage of peptide bonds with broad specificity.. With respect to regulation, allosterically activated by HslU binding. Functionally, protease subunit of a proteasome-like degradation complex believed to be a general protein degrading machinery. In Shewanella piezotolerans (strain WP3 / JCM 13877), this protein is ATP-dependent protease subunit HslV.